Reading from the N-terminus, the 240-residue chain is MATLFIADLHLCVEEPAITAGFLRFLAGEARNADALYILGDLFEAWIGDDDPNPLHRQMAAAIKAVSDSGVPCYFIHGNRDFLLGKRFARESDMTLLPEEKVLELYGRRVLIMHGDTLCTDDAGYQAFRAKVHNPWLQTLFLALPLFVRKRIAARMRANSKEANSSKSLAIMDVNQNAVVSAMEKHQVQWLIHGHTHRPAVHELIANQQPAFRVVLGAWHTEGSMVKVTADDVELIHFPF.

Positions 8, 10, 41, 79, and 114 each coordinate Mn(2+). Residue 79-80 (NR) participates in substrate binding. Residues aspartate 122, serine 160, asparagine 164, lysine 167, and histidine 195 each contribute to the substrate site. Mn(2+)-binding residues include histidine 195 and histidine 197.

It belongs to the LpxH family. It depends on Mn(2+) as a cofactor.

It localises to the cell inner membrane. The catalysed reaction is UDP-2-N,3-O-bis[(3R)-3-hydroxytetradecanoyl]-alpha-D-glucosamine + H2O = 2-N,3-O-bis[(3R)-3-hydroxytetradecanoyl]-alpha-D-glucosaminyl 1-phosphate + UMP + 2 H(+). Its pathway is glycolipid biosynthesis; lipid IV(A) biosynthesis; lipid IV(A) from (3R)-3-hydroxytetradecanoyl-[acyl-carrier-protein] and UDP-N-acetyl-alpha-D-glucosamine: step 4/6. Hydrolyzes the pyrophosphate bond of UDP-2,3-diacylglucosamine to yield 2,3-diacylglucosamine 1-phosphate (lipid X) and UMP by catalyzing the attack of water at the alpha-P atom. Involved in the biosynthesis of lipid A, a phosphorylated glycolipid that anchors the lipopolysaccharide to the outer membrane of the cell. This Shigella dysenteriae serotype 1 (strain Sd197) protein is UDP-2,3-diacylglucosamine hydrolase.